Consider the following 70-residue polypeptide: Large ribosomal subunit protein bL31 (70 aa).

Positions 16, 18, 38, and 41 each coordinate Zn(2+).

The protein belongs to the bacterial ribosomal protein bL31 family. Type A subfamily. As to quaternary structure, part of the 50S ribosomal subunit. Zn(2+) serves as cofactor.

Functionally, binds the 23S rRNA. The chain is Large ribosomal subunit protein bL31 from Bifidobacterium adolescentis (strain ATCC 15703 / DSM 20083 / NCTC 11814 / E194a).